Here is a 100-residue protein sequence, read N- to C-terminus: Small ribosomal subunit protein uS14c (100 aa).

This sequence belongs to the universal ribosomal protein uS14 family. Part of the 30S ribosomal subunit.

It localises to the plastid. Its subcellular location is the chloroplast. Binds 16S rRNA, required for the assembly of 30S particles. This Platanus occidentalis (Sycamore) protein is Small ribosomal subunit protein uS14c.